A 251-amino-acid chain; its full sequence is tRNA-uridine aminocarboxypropyltransferase 2 (251 aa).

4 residues coordinate Zn(2+): Cys23, Cys26, Cys33, and Cys35. Positions 131–134 (DGTW) match the DXTW motif.

Belongs to the TDD superfamily. DTWD2 family.

The catalysed reaction is a uridine in tRNA + S-adenosyl-L-methionine = a 3-[(3S)-3-amino-3-carboxypropyl]uridine in tRNA + S-methyl-5'-thioadenosine + H(+). In terms of biological role, catalyzes the formation of 3-(3-amino-3-carboxypropyl)uridine (acp3U) at position 20a in the D-loop of several cytoplasmic tRNAs (acp3U(20a)). This Drosophila melanogaster (Fruit fly) protein is tRNA-uridine aminocarboxypropyltransferase 2.